The sequence spans 150 residues: MDTLLEHEAADLYDEQQIDRIGDAVTGDAGDDSDDTLEDGQQLLGVNRQMDILLDAPQEPPMAVFPARGGPNGGPPRLRKKRSFYTMVKPTPPCQSREPEMCRLMASVTRAMRQVREDQRGEYFANYLVENMTSQNYPNGVGLPQHWGQF.

The segment at 60-84 (PPMAVFPARGGPNGGPPRLRKKRSF) is disordered. N131 carries an N-linked (GlcNAc...) asparagine glycan.

Belongs to the male-specific scotti family.

Functionally, post-meiotically transcribed gene that has a role in late spermiogenesis; required for actin cone progression during spermatid individualization. The chain is Male-specific protein scotti from Drosophila yakuba (Fruit fly).